A 564-amino-acid chain; its full sequence is MAFNFNWSPLMADAGFYTRAQDLLTAALNKSPKPPIIVDDIKVTELNLGSIPPDLEILEVGDLAEDRFRGIFKMSYNGDAFLTLKTRVQANPLNTFLVTRPSFASPKPLAAAAGLTIPLQITLSEFRLSGFVVLVFSKQKGITVVFRNDPLESLKVSSTFDSISFVRDYLQKAIEGQLRALFMDELPAIIHRLSLRLWVPEYRDRESESVNTLDQSSGPGQDPLASPPQDPVDASGNALNPSEVASLSLDSGVEIHSLFSQKNLLRLAALTDSQRTLSLFTPSIKDVVYRAWTASTELGDSNTLTSPASPVLSRAQSHIGSLHSFVDNASTISMQSGGSSNFSGHGLNLRSGRHPRPHGKKRKKRVVDLRRPKTTDDMESVSGESVFSSENATSAPTIFSSPAQFSEEKNDDPVTPPLAPQNDLHLPTIHERRRISQGEHTLTRRSVPSMSEVAQPSSSRNSAAMIADTWPDPDATPRNSIRLPSSDRANNPLTTAHLPSSAIQYPPPIPDNNDPRQQAWLSKMAAELARRIQEEKVGPSGSRPFPDFWDDHSREEIPPPAYGH.

The SMP-LTD domain occupies M1–E208. Disordered regions lie at residues E208–N240, S336–T397, Q404–D423, R434–Q517, and I532–H564. Positions S209 to P219 are enriched in polar residues. Positions S351 to R365 are enriched in basic residues. Basic and acidic residues predominate over residues V366–D376. A compositionally biased stretch (low complexity) spans S380–E390. 2 stretches are compositionally biased toward polar residues: residues G438–S462 and P477–I503.

This sequence belongs to the MDM34 family. Component of the ER-mitochondria encounter structure (ERMES) or MDM complex, composed of mmm1, mdm10, mdm12 and mdm34.

The protein resides in the mitochondrion outer membrane. Its function is as follows. Component of the ERMES/MDM complex, which serves as a molecular tether to connect the endoplasmic reticulum (ER) and mitochondria. Components of this complex are involved in the control of mitochondrial shape and protein biogenesis, and function in nonvesicular lipid trafficking between the ER and mitochondria. Mdm34 is required for the interaction of the ER-resident membrane protein mmm1 and the outer mitochondrial membrane-resident beta-barrel protein mdm10. The polypeptide is Mitochondrial distribution and morphology protein 34 (Talaromyces stipitatus (strain ATCC 10500 / CBS 375.48 / QM 6759 / NRRL 1006) (Penicillium stipitatum)).